Reading from the N-terminus, the 124-residue chain is Small ribosomal subunit protein uS12 (124 aa).

A disordered region spans residues 1–24; the sequence is MPTINQLIKKPRKSQKEKTASPAL. Asp-89 is modified (3-methylthioaspartic acid).

It belongs to the universal ribosomal protein uS12 family. Part of the 30S ribosomal subunit. Contacts proteins S8 and S17. May interact with IF1 in the 30S initiation complex.

With S4 and S5 plays an important role in translational accuracy. In terms of biological role, interacts with and stabilizes bases of the 16S rRNA that are involved in tRNA selection in the A site and with the mRNA backbone. Located at the interface of the 30S and 50S subunits, it traverses the body of the 30S subunit contacting proteins on the other side and probably holding the rRNA structure together. The combined cluster of proteins S8, S12 and S17 appears to hold together the shoulder and platform of the 30S subunit. This is Small ribosomal subunit protein uS12 from Borrelia hermsii (strain HS1 / DAH).